Consider the following 242-residue polypeptide: Segregation and condensation protein A (242 aa).

It belongs to the ScpA family. Component of a cohesin-like complex composed of ScpA, ScpB and the Smc homodimer, in which ScpA and ScpB bind to the head domain of Smc. The presence of the three proteins is required for the association of the complex with DNA.

Its subcellular location is the cytoplasm. Participates in chromosomal partition during cell division. May act via the formation of a condensin-like complex containing Smc and ScpB that pull DNA away from mid-cell into both cell halves. This chain is Segregation and condensation protein A, found in Streptococcus mitis.